Here is a 380-residue protein sequence, read N- to C-terminus: MGSSCRIECIFFSEFHPTLGPKITYQVPEDFISRELFDTVQVYIITKPELQNKLITVTAMEKKLIGCPVCIEHKKYSRNALLFNLGFVCDAQAKTCALEPIVKKLAGYLTTLELESSFVSNEESKQKLVPIMTILLEELNASGRCTLPIDESNTIHLKVIEQRPDPPVAQEYDVPVFTKDKEDFFSSQWDLTTQQILPYIDGFRHVQKISAEADVELNLVRIAIQNLLYYGVVTLVSILQYSNVYCPTPKVQDLVDDKSLQEACLSYVTKQGHKRASLRDVFQLYCSLSPGTTVRDLIGRHPQQLQHVDERKLIQFGLMKNLIRRLQKYPVRVSREERSHPARLYTGCHSYDEICCKTGMSYHELDERLENDPNIIICWK.

Residues 1 to 133 (MGSSCRIECI…SKQKLVPIMT (133 aa)) form an interaction with PDPK1 region. A GDP-binding site is contributed by Arg-78. Arg-78 carries the asymmetric dimethylarginine modification. Residues Lys-158 and Lys-357 each participate in a glycyl lysine isopeptide (Lys-Gly) (interchain with G-Cter in ubiquitin) cross-link.

It belongs to the NPR2 family. Within the GATOR complex, component of the GATOR1 subcomplex, made of DEPDC5, NPRL2 and NPRL3. GATOR1 mediates the strong interaction of the GATOR complex with small GTPases Rag (RagA/RRAGA, RagB/RRAGB, RagC/RRAGC and/or RagD/RRAGD) heterodimers. GATOR1 interacts with GPR155/LYCHOS; interaction takes place in presence of cholesterol and prevents interaction between GATOR1 and KICSTOR. Interacts with PDPK1. Post-translationally, in the presence of abundant amino acids, ubiquitinated at Lys-158 and Lys-357 via 'Lys-6'-linked ubiquitination by the WDR24 component of the GATOR2 complex, thereby inhibiting the GATOR1 complex and promoting mTORC1 activation. Asymmetric dimethylation at Arg-78 by PRMT1 inhibits the GTPase activator activity of the GATOR1 complex and consequently inducing timely mTORC1 activation under methionine-sufficient conditions.

Its subcellular location is the lysosome membrane. Functionally, catalytic component of the GATOR1 complex, a multiprotein complex that functions as an inhibitor of the amino acid-sensing branch of the mTORC1 pathway. In response to amino acid depletion, the GATOR1 complex has GTPase activating protein (GAP) activity and strongly increases GTP hydrolysis by RagA/RRAGA (or RagB/RRAGB) within heterodimeric Rag complexes, thereby turning them into their inactive GDP-bound form, releasing mTORC1 from lysosomal surface and inhibiting mTORC1 signaling. In the presence of abundant amino acids, the GATOR1 complex is ubiquitinated and inhibited by GATOR2. Within the GATOR1 complex, NPRL2 constitutes the catalytic subunit that mediates the GTPase activator activity and under methionine-sufficient conditions, the GTPase activator activity is inhibited by PRMT1 through methylation and consequently inducing timely mTORC1 activation. Its function is as follows. Suppresses Src-dependent tyrosine phosphorylation and activation of PDPK1 and its downstream signaling. Down-regulates PDPK1 kinase activity by interfering with tyrosine phosphorylation at 'Tyr-9', 'Tyr-373' and 'Tyr-376' residues. May act as a tumor suppressor. Suppresses cell growth and enhances sensitivity to various anticancer drugs. The polypeptide is GATOR1 complex protein NPRL2 (Mus musculus (Mouse)).